The following is a 267-amino-acid chain: 4-hydroxy-tetrahydrodipicolinate reductase (267 aa).

10 to 15 provides a ligand contact to NAD(+); it reads GCLGKQ. Residue Arg37 coordinates NADP(+). Residues 99 to 101 and 122 to 125 each bind NAD(+); these read GTT and TTNV. His154 functions as the Proton donor/acceptor in the catalytic mechanism. Position 155 (His155) interacts with (S)-2,3,4,5-tetrahydrodipicolinate. Lys158 (proton donor) is an active-site residue. 164–165 contributes to the (S)-2,3,4,5-tetrahydrodipicolinate binding site; the sequence is GT.

Belongs to the DapB family.

Its subcellular location is the cytoplasm. It catalyses the reaction (S)-2,3,4,5-tetrahydrodipicolinate + NAD(+) + H2O = (2S,4S)-4-hydroxy-2,3,4,5-tetrahydrodipicolinate + NADH + H(+). The catalysed reaction is (S)-2,3,4,5-tetrahydrodipicolinate + NADP(+) + H2O = (2S,4S)-4-hydroxy-2,3,4,5-tetrahydrodipicolinate + NADPH + H(+). It functions in the pathway amino-acid biosynthesis; L-lysine biosynthesis via DAP pathway; (S)-tetrahydrodipicolinate from L-aspartate: step 4/4. In terms of biological role, catalyzes the conversion of 4-hydroxy-tetrahydrodipicolinate (HTPA) to tetrahydrodipicolinate. This is 4-hydroxy-tetrahydrodipicolinate reductase from Ehrlichia chaffeensis (strain ATCC CRL-10679 / Arkansas).